A 235-amino-acid polypeptide reads, in one-letter code: 7-cyano-7-deazaguanine synthase (235 aa).

Residue 11 to 21 (FSGGQDSTTCV) coordinates ATP. Zn(2+) contacts are provided by cysteine 199, cysteine 214, cysteine 217, and cysteine 220.

The protein belongs to the QueC family. It depends on Zn(2+) as a cofactor.

It catalyses the reaction 7-carboxy-7-deazaguanine + NH4(+) + ATP = 7-cyano-7-deazaguanine + ADP + phosphate + H2O + H(+). Its pathway is purine metabolism; 7-cyano-7-deazaguanine biosynthesis. In terms of biological role, catalyzes the ATP-dependent conversion of 7-carboxy-7-deazaguanine (CDG) to 7-cyano-7-deazaguanine (preQ(0)). The chain is 7-cyano-7-deazaguanine synthase from Janthinobacterium sp. (strain Marseille) (Minibacterium massiliensis).